The sequence spans 317 residues: Aspartate carbamoyltransferase catalytic subunit (317 aa).

Positions 65 and 66 each coordinate carbamoyl phosphate. Lys93 lines the L-aspartate pocket. Carbamoyl phosphate-binding residues include Arg115, His145, and Gln148. L-aspartate-binding residues include Arg178 and Arg233. 2 residues coordinate carbamoyl phosphate: Gly274 and Pro275.

It belongs to the aspartate/ornithine carbamoyltransferase superfamily. ATCase family. Heterododecamer (2C3:3R2) of six catalytic PyrB chains organized as two trimers (C3), and six regulatory PyrI chains organized as three dimers (R2).

It carries out the reaction carbamoyl phosphate + L-aspartate = N-carbamoyl-L-aspartate + phosphate + H(+). The protein operates within pyrimidine metabolism; UMP biosynthesis via de novo pathway; (S)-dihydroorotate from bicarbonate: step 2/3. Its function is as follows. Catalyzes the condensation of carbamoyl phosphate and aspartate to form carbamoyl aspartate and inorganic phosphate, the committed step in the de novo pyrimidine nucleotide biosynthesis pathway. This Bordetella bronchiseptica (strain ATCC BAA-588 / NCTC 13252 / RB50) (Alcaligenes bronchisepticus) protein is Aspartate carbamoyltransferase catalytic subunit.